A 478-amino-acid chain; its full sequence is D-ribulose kinase (478 aa).

Residues 1–38 (MLILRQFQISSFELFQSPKQTGFYSSSRSVPLPRTRFY) constitute a chloroplast transit peptide. Residues Asp-60, 64–67 (SGGR), and Asp-278 each bind substrate. Residues Ser-300, Gly-338, and 433–437 (GGAKN) contribute to the ATP site.

Belongs to the FGGY kinase family. A divalent metal cation serves as cofactor.

It is found in the plastid. It localises to the chloroplast. The catalysed reaction is D-ribulose + ATP = D-ribulose 5-phosphate + ADP + H(+). Functionally, exhibits ATP hydrolysis without substrate. Can phosphorylate D-ribulose with low efficiency. This Arabidopsis thaliana (Mouse-ear cress) protein is D-ribulose kinase.